A 209-amino-acid chain; its full sequence is Superoxide dismutase [Mn/Fe] (209 aa).

Residues His38, His90, Asp172, and His176 each coordinate Fe(3+). Residues His38, His90, Asp172, and His176 each coordinate Mn(2+).

Belongs to the iron/manganese superoxide dismutase family. Mn(2+) serves as cofactor. Fe(3+) is required as a cofactor.

It carries out the reaction 2 superoxide + 2 H(+) = H2O2 + O2. Functionally, destroys superoxide anion radicals which are normally produced within the cells and which are toxic to biological systems. Catalyzes the dismutation of superoxide anion radicals into O2 and H2O2 by successive reduction and oxidation of the transition metal ion at the active site. The polypeptide is Superoxide dismutase [Mn/Fe] (sodB) (Rickettsia bellii (strain RML369-C)).